The primary structure comprises 417 residues: Lissencephaly-1 homolog (417 aa).

Residues 7–39 (QKEELNGAILDYFDSSGYKLTSTEFTKETNIEL) form the LisH domain. A coiled-coil region spans residues 52-80 (TSVIRLQKKVMDLEAKVSQLEEELNNGGR). The disordered stretch occupies residues 72-93 (EEELNNGGRGPARRGKEDALPR). 7 WD repeats span residues 102 to 143 (GHRN…RTLK), 144 to 185 (GHTN…KTLH), 186 to 225 (GHDHNVSCVRFLPSGDQLVSSSRDKSIKVWETATGYCTKT), 228 to 267 (GHEDWVRKVIVSEDGTTLASCSNDQTARVWNLAKGECLLT), 270 to 339 (EHSH…CLQT), 342 to 383 (GHDN…KTIN), and 385 to 417 (AHSHFISCLDFCSHNPHIATGGVDDIIKIWKLG).

It belongs to the WD repeat LIS1/nudF family.

It is found in the cytoplasm. It localises to the cytoskeleton. Its subcellular location is the microtubule organizing center. The protein resides in the centrosome. Positively regulates the activity of the minus-end directed microtubule motor protein dynein. May enhance dynein-mediated microtubule sliding by targeting dynein to the microtubule plus end. Required for several dynein- and microtubule-dependent processes. The protein is Lissencephaly-1 homolog of Heterostelium pallidum (strain ATCC 26659 / Pp 5 / PN500) (Cellular slime mold).